We begin with the raw amino-acid sequence, 283 residues long: Formamidopyrimidine-DNA glycosylase (283 aa).

Catalysis depends on Pro2, which acts as the Schiff-base intermediate with DNA. Glu3 functions as the Proton donor in the catalytic mechanism. Lys58 acts as the Proton donor; for beta-elimination activity in catalysis. 3 residues coordinate DNA: His100, Arg119, and Arg162. Residues 247-283 form an FPG-type zinc finger; that stretch reads RVYGREGLPCVTPGCSGTVGRIVQSGRSSFHCPLCQR. Residue Arg273 is the Proton donor; for delta-elimination activity of the active site.

Belongs to the FPG family. As to quaternary structure, monomer. It depends on Zn(2+) as a cofactor.

It catalyses the reaction Hydrolysis of DNA containing ring-opened 7-methylguanine residues, releasing 2,6-diamino-4-hydroxy-5-(N-methyl)formamidopyrimidine.. It carries out the reaction 2'-deoxyribonucleotide-(2'-deoxyribose 5'-phosphate)-2'-deoxyribonucleotide-DNA = a 3'-end 2'-deoxyribonucleotide-(2,3-dehydro-2,3-deoxyribose 5'-phosphate)-DNA + a 5'-end 5'-phospho-2'-deoxyribonucleoside-DNA + H(+). Involved in base excision repair of DNA damaged by oxidation or by mutagenic agents. Acts as a DNA glycosylase that recognizes and removes damaged bases. Has a preference for oxidized purines, such as 7,8-dihydro-8-oxoguanine (8-oxoG). Has AP (apurinic/apyrimidinic) lyase activity and introduces nicks in the DNA strand. Cleaves the DNA backbone by beta-delta elimination to generate a single-strand break at the site of the removed base with both 3'- and 5'-phosphates. The polypeptide is Formamidopyrimidine-DNA glycosylase (Cereibacter sphaeroides (strain ATCC 17029 / ATH 2.4.9) (Rhodobacter sphaeroides)).